Reading from the N-terminus, the 832-residue chain is MHQLFRLVLGQKDLSRAGDLFSLDDAEIEDSLTEALEQIKVISSSLDYQTNNNDQAVVEICITRITTAIRETESIEKHARALVGLWDSCLEHNLRPAGKDEDTPHAKIASDIMSCILQNYNRTPVMVLAVPIAVKFLHRGSKELCRNMSNYLSLAAITKADLLADHTEGIVKSILQGNAMLLRVLPAVYEKQPQPINRHLAELLALMSQLEQTEQYHLLRLLHVAAKRKDVEVVQKCVPFLIRNLKESTYNDIILNILIEIAGHEPLALNSFLPMLKEIAEQFPYLTGQMARIFGAVGHVDEERARSCLRYLVSQLANMEHSFHHILLLEIKSLTDAFSSILGPHSRDIFRMSNSFTNIAKLLSRQLENSKAESGRRRTGTEVSFPEKFREPKTMEPKSEDHEKLQVKIQAFEDKINAESHTPGSVRRYSLDHVSKEERKNVRFSRSRSLALNTVLTNSVNVEDGEIEGKTGMHASISLSEIDPPGHGIGKVPFKTDTHGSQLRNSSASHPSIIHSEPENMPETFKENVQEEIPEAAISPVEYQDKLYLHLKENLSKVKAYALEIAKKVPIPDQCTIEDNTRSCVAKLFFTCSLKGHYCLYSKSSFTLVSQAPQPWIQIMFLFQQSLFPEPLSIQSGSVQFLKALWEKTQGTGTHSFEVAMTESTFPQQKDLDQLQLHLEEVRFFDVFGFSETAGAWQCFMCNNPEKATVINQDGQPLIEGKLKEKQVRWKFIKRWKTRYFTLAGNQLLFQKGKSDDPDDSPIELSKVQSVKAVAKKRRDRSLPRAFEIFTDNKTYVFKAKDEKNAEEWLQCINVALAQAKERESREVTTYL.

The tract at residues 201–319 is interaction with TGFBR1; that stretch reads AELLALMSQL…RYLVSQLANM (119 aa). A disordered region spans residues 497–519; it reads DTHGSQLRNSSASHPSIIHSEPE. Positions 499–510 are enriched in polar residues; sequence HGSQLRNSSASH. Positions 663–832 are interaction with TGFBR1; it reads ESTFPQQKDL…RESREVTTYL (170 aa). The PH domain maps to 716 to 818; the sequence is QPLIEGKLKE…WLQCINVALA (103 aa).

Belongs to the MELT/VEPH family. Interacts with TGFBR1.

It is found in the cell membrane. Interacts with TGF-beta receptor type-1 (TGFBR1) and inhibits dissociation of activated SMAD2 from TGFBR1, impeding its nuclear accumulation and resulting in impaired TGF-beta signaling. May also affect FOXO, Hippo and Wnt signaling. The sequence is that of Ventricular zone-expressed PH domain-containing protein homolog 1 (Veph1) from Rattus norvegicus (Rat).